The chain runs to 82 residues: Small ribosomal subunit protein uS17 (82 aa).

It belongs to the universal ribosomal protein uS17 family. In terms of assembly, part of the 30S ribosomal subunit.

Its function is as follows. One of the primary rRNA binding proteins, it binds specifically to the 5'-end of 16S ribosomal RNA. The sequence is that of Small ribosomal subunit protein uS17 from Rhodopseudomonas palustris (strain HaA2).